The primary structure comprises 379 residues: Flap endonuclease 1 (379 aa).

Residues Met-1–Arg-105 form an N-domain region. Mg(2+) is bound at residue Asp-34. Residues Arg-47 and Arg-71 each contribute to the DNA site. The Mg(2+) site is built by Asp-87, Glu-159, Glu-161, Asp-180, and Asp-182. The tract at residues Asp-123–His-254 is I-domain. Glu-159 lines the DNA pocket. DNA-binding residues include Gly-232 and Asp-234. Asp-234 provides a ligand contact to Mg(2+). Residues Val-341–Phe-349 are interaction with PCNA. The disordered stretch occupies residues Arg-344–Lys-379. The segment covering Lys-361 to Lys-379 has biased composition (basic residues).

The protein belongs to the XPG/RAD2 endonuclease family. FEN1 subfamily. As to quaternary structure, interacts with PCNA. Three molecules of FEN1 bind to one PCNA trimer with each molecule binding to one PCNA monomer. PCNA stimulates the nuclease activity without altering cleavage specificity. Mg(2+) serves as cofactor. Post-translationally, phosphorylated. Phosphorylation upon DNA damage induces relocalization to the nuclear plasma.

The protein localises to the nucleus. Its subcellular location is the nucleolus. The protein resides in the nucleoplasm. It is found in the mitochondrion. Functionally, structure-specific nuclease with 5'-flap endonuclease and 5'-3' exonuclease activities involved in DNA replication and repair. During DNA replication, cleaves the 5'-overhanging flap structure that is generated by displacement synthesis when DNA polymerase encounters the 5'-end of a downstream Okazaki fragment. It enters the flap from the 5'-end and then tracks to cleave the flap base, leaving a nick for ligation. Also involved in the long patch base excision repair (LP-BER) pathway, by cleaving within the apurinic/apyrimidinic (AP) site-terminated flap. Acts as a genome stabilization factor that prevents flaps from equilibrating into structures that lead to duplications and deletions. Also possesses 5'-3' exonuclease activity on nicked or gapped double-stranded DNA, and exhibits RNase H activity. Also involved in replication and repair of rDNA and in repairing mitochondrial DNA. This Debaryomyces hansenii (strain ATCC 36239 / CBS 767 / BCRC 21394 / JCM 1990 / NBRC 0083 / IGC 2968) (Yeast) protein is Flap endonuclease 1.